A 142-amino-acid chain; its full sequence is ATP synthase F(0) complex subunit C3, mitochondrial (142 aa).

The N-terminal 67 residues, 1–67 (MFACAKLACT…REFQTSAISR (67 aa)), are a transit peptide targeting the mitochondrion. The helical transmembrane segment at 83-103 (VGVAGSGAGIGTVFGSLIIGY) threads the bilayer. K110 bears the N6,N6,N6-trimethyllysine mark. Residues 118–138 (ILGFALSEAMGLFCLMVAFLI) traverse the membrane as a helical segment.

Belongs to the ATPase C chain family. As to quaternary structure, F-type ATPases have 2 components, CF(1) - the catalytic core - and CF(0) - the membrane proton channel. CF(1) has five subunits: alpha(3), beta(3), gamma(1), delta(1), epsilon(1). CF(0) has three main subunits: a, b and c. Interacts with TMEM70 and TMEM242. In terms of processing, trimethylated by ATPSCKMT at Lys-110. Methylation is required for proper incorporation of the C subunit into the ATP synthase complex and mitochondrial respiration.

It localises to the mitochondrion membrane. Its function is as follows. Mitochondrial membrane ATP synthase (F(1)F(0) ATP synthase or Complex V) produces ATP from ADP in the presence of a proton gradient across the membrane which is generated by electron transport complexes of the respiratory chain. F-type ATPases consist of two structural domains, F(1) - containing the extramembraneous catalytic core and F(0) - containing the membrane proton channel, linked together by a central stalk and a peripheral stalk. During catalysis, ATP synthesis in the catalytic domain of F(1) is coupled via a rotary mechanism of the central stalk subunits to proton translocation. Part of the complex F(0) domain. A homomeric c-ring of probably 10 subunits is part of the complex rotary element. The protein is ATP synthase F(0) complex subunit C3, mitochondrial of Homo sapiens (Human).